A 129-amino-acid polypeptide reads, in one-letter code: Large ribosomal subunit protein bL20 (129 aa).

This sequence belongs to the bacterial ribosomal protein bL20 family.

Its function is as follows. Binds directly to 23S ribosomal RNA and is necessary for the in vitro assembly process of the 50S ribosomal subunit. It is not involved in the protein synthesizing functions of that subunit. The sequence is that of Large ribosomal subunit protein bL20 from Mycobacteroides abscessus (strain ATCC 19977 / DSM 44196 / CCUG 20993 / CIP 104536 / JCM 13569 / NCTC 13031 / TMC 1543 / L948) (Mycobacterium abscessus).